The following is a 309-amino-acid chain: Porphobilinogen deaminase (309 aa).

C241 is modified (S-(dipyrrolylmethanemethyl)cysteine).

Belongs to the HMBS family. As to quaternary structure, monomer. Requires dipyrromethane as cofactor.

The enzyme catalyses 4 porphobilinogen + H2O = hydroxymethylbilane + 4 NH4(+). It participates in porphyrin-containing compound metabolism; protoporphyrin-IX biosynthesis; coproporphyrinogen-III from 5-aminolevulinate: step 2/4. Functionally, tetrapolymerization of the monopyrrole PBG into the hydroxymethylbilane pre-uroporphyrinogen in several discrete steps. The sequence is that of Porphobilinogen deaminase from Bacillus cereus (strain ATCC 10987 / NRS 248).